The sequence spans 404 residues: MSVGMAAPRAAFACDPDASRGRLFDELPSKTRSPFRRDCDRVIHSTGFRRLKHKTQVFVYHEGDHYRTRLTHSLEVAQIARAIARQLGLDEDLTEALALAHDLGHPPFGHAGERALDACLQRYGGFDHNAQSLRVVTALEHRYPEFNGLNLTWETLEGIVKHNGPLTDRSGAPLGRYQAHGVPTGIVEFNRCFDLELWSHASLEAQVAGIADDIAYDAHDIDDGLRAGLFGVDDLGEMPLTAQMTAAIDVRYPGLDPARRGAELVRELISFLIGAAVAEAERRLIAAQPASVQAVREAGQDLIMFAPDAAEAEALIKAFLKRHMYRHPRVMRVMDDAETVVFELFARYRDHPADLPAEWLPANAGQGETEADRLRRICNFIAGMTDRYALTEHQRLFDLTPELR.

The HD domain maps to 69-217; sequence RLTHSLEVAQ…AGIADDIAYD (149 aa).

Belongs to the dGTPase family. Type 2 subfamily.

This Rhodopseudomonas palustris (strain BisB18) protein is Deoxyguanosinetriphosphate triphosphohydrolase-like protein.